Consider the following 417-residue polypeptide: GTP-binding protein YPT11 (417 aa).

Residues 1–34 are disordered; the sequence is MSQRKRYSLNVVTSPSIPSPTPSAPIRTNESNWE. GTP is bound by residues 97-104, 228-232, and 292-295; these read GDANVGKT, DTAGQ, and NKID. Residues Cys415 and Cys416 are each lipidated (S-geranylgeranyl cysteine).

The protein belongs to the small GTPase superfamily. Rab family. In terms of assembly, interacts with MYO2 (via C-terminal tail domain). Interacts with YIF1, YIP3, YIP4 and YIP5.

It is found in the endoplasmic reticulum membrane. The protein resides in the bud tip. It localises to the bud neck. In terms of biological role, involved in the positive control of both endoplasmic reticulum (ER) and mitochondrion inheritance during cell divison. Required for the MYO2-dependent retention of newly inherited mitochondria at the bud tip in developing daughter cells. In Saccharomyces cerevisiae (strain YJM789) (Baker's yeast), this protein is GTP-binding protein YPT11 (YPT11).